Consider the following 127-residue polypeptide: Probable tautomerase YusQ (127 aa).

Catalysis depends on Pro-2, which acts as the Proton acceptor; via imino nitrogen.

The protein belongs to the 4-oxalocrotonate tautomerase family.

In Bacillus subtilis (strain 168), this protein is Probable tautomerase YusQ (yusQ).